Consider the following 381-residue polypeptide: Short-chain dehydrogenase anuD (381 aa).

The NADP(+) site is built by I84, K109, D133, N158, Y244, and K248. The active-site Proton acceptor is the Y244. The active-site Proton donor is Y244. K248 functions as the Lowers pKa of active site Tyr in the catalytic mechanism.

This sequence belongs to the short-chain dehydrogenases/reductases (SDR) family.

In terms of biological role, highly reducing polyketide synthase; part of the gene cluster that mediates the biosynthesis of annullatin D, an alkylated aromatic polyketide with a fused dihydrobenzofuran lactone ring system that exhibits potent agonistic activities toward the cannabinoid receptors. AnuD does not seem to play a role within the pathway. The annullatin backbone 2-hydroxymethyl-3-pentylphenol is assembled from one acetyl-CoA starter unit and 5 malonyl-CoA elongation units by cooperation of the highly reducing polyketide synthase anuA, the short-chain dehydrogenase anuB and the oxidoreductase anuC, before being hydroxylated at the C-5 alkyl chain by the cytochrome P450 monooxygenase anuE to form (8S)-annullatin E. The prenyltransferase anuH subsequently installs one isoprenyl group at the benzene ring to form (8S)-annullatin J. Enzymatic or nonenzymatic dihydro-benzofuran ring formation between the prenyl and the phenolic hydroxyl groups in (8S)-annullatin J results in two diastereomers (2S,9S)-annullatin H and compound 12. The intermediate (2S,9S)-annullatin H is then converted to (2S,9S)-annullatin D by the FAD-linked oxidoreductase anuG-catalyzed five-member lactone ring formation. The isomer 12 acts as a substrate for the short-chain dehydrogenase anuF and is oxidized to (2R)-annullatin F, which is subsequently acetylated by an acetyltransferase leading to (2R)-annullatin G formation. The remaining enzymes identified within the cluster, anuD, anuI and anuJ, seem not to be involved in annullatin biosynthesis. The chain is Short-chain dehydrogenase anuD from Penicillium roqueforti (strain FM164).